A 189-amino-acid chain; its full sequence is Phosphoheptose isomerase (189 aa).

The region spanning 34 to 189 (LVAALKGGKK…CDLVEKGLFK (156 aa)) is the SIS domain. Residue 49–51 (NGG) coordinates substrate. His58 and Glu62 together coordinate Zn(2+). Residues Glu62, 91–92 (ND), 117–119 (STS), Ser122, and Gln169 each bind substrate. Positions 169 and 177 each coordinate Zn(2+).

This sequence belongs to the SIS family. GmhA subfamily. In terms of assembly, homotetramer. The cofactor is Zn(2+).

The protein localises to the cytoplasm. The catalysed reaction is 2 D-sedoheptulose 7-phosphate = D-glycero-alpha-D-manno-heptose 7-phosphate + D-glycero-beta-D-manno-heptose 7-phosphate. It participates in carbohydrate biosynthesis; D-glycero-D-manno-heptose 7-phosphate biosynthesis; D-glycero-alpha-D-manno-heptose 7-phosphate and D-glycero-beta-D-manno-heptose 7-phosphate from sedoheptulose 7-phosphate: step 1/1. Functionally, catalyzes the isomerization of sedoheptulose 7-phosphate in D-glycero-D-manno-heptose 7-phosphate. The polypeptide is Phosphoheptose isomerase (Geobacter metallireducens (strain ATCC 53774 / DSM 7210 / GS-15)).